Consider the following 191-residue polypeptide: Cell division protein SepF (191 aa).

The segment at 21–96 is disordered; sequence EVEEPAVASV…NQQPAQEKTT (76 aa). The segment covering 25–56 has biased composition (low complexity); it reads PAVASVKRQQDAAQPASQQQKAQSHQYHQSAS. 2 stretches are compositionally biased toward polar residues: residues 57–69 and 86–95; these read RPSQ…GQNR and HNQQPAQEKT.

This sequence belongs to the SepF family. Homodimer. Interacts with FtsZ.

Its subcellular location is the cytoplasm. Functionally, cell division protein that is part of the divisome complex and is recruited early to the Z-ring. Probably stimulates Z-ring formation, perhaps through the cross-linking of FtsZ protofilaments. Its function overlaps with FtsA. In Streptococcus mutans serotype c (strain ATCC 700610 / UA159), this protein is Cell division protein SepF.